A 362-amino-acid chain; its full sequence is Putative RING-H2 finger protein ATL21B (362 aa).

The signal sequence occupies residues 1 to 23; that stretch reads MIISKQLFLLFFLLFFIFPLRHA. Residues 234–254 form a helical membrane-spanning segment; that stretch reads VVAVLICLSIIGAVILFVTCI. An RING-type; atypical zinc finger spans residues 316–358; that stretch reads CPICLSEYVSKETVRFIPECDHCFHAKCIDVWLKIHGSCPLCR.

Belongs to the RING-type zinc finger family. ATL subfamily.

The protein localises to the membrane. It catalyses the reaction S-ubiquitinyl-[E2 ubiquitin-conjugating enzyme]-L-cysteine + [acceptor protein]-L-lysine = [E2 ubiquitin-conjugating enzyme]-L-cysteine + N(6)-ubiquitinyl-[acceptor protein]-L-lysine.. It functions in the pathway protein modification; protein ubiquitination. The chain is Putative RING-H2 finger protein ATL21B (ATL21B) from Arabidopsis thaliana (Mouse-ear cress).